The sequence spans 306 residues: MPELPEVETVKRGLAPTMEGALLVRAELRRPDLRFPFPENFEDAVAGRRIVALSRRAKYLTIELEGGDVIIAHLGMSGSFRIEFDGPGEGRIKESADPAVPGDFHRPRSKDEKHDHVVFHLDASCGPARVIYNDPRRFGFMALARREALAEHVFLRGLGEEPTGNALDAAYLAARFSGKAQPLKAALLDQRTIAGLGNIYVCEALWRSGLSPKRAAGTLVDKRARPKQALVQLTDAIRAVIADAIAAGGSSLKDHIQADGSLGYFQHSFSVYDREGEACRTSGCRGTVERIVQAGRSTFYCPHCQK.

The active-site Schiff-base intermediate with DNA is Pro-2. Residue Glu-3 is the Proton donor of the active site. Residue Lys-58 is the Proton donor; for beta-elimination activity of the active site. DNA is bound by residues His-114, Arg-136, and Lys-179. The segment at 270 to 306 adopts an FPG-type zinc-finger fold; that stretch reads SVYDREGEACRTSGCRGTVERIVQAGRSTFYCPHCQK. Arg-296 acts as the Proton donor; for delta-elimination activity in catalysis.

It belongs to the FPG family. Monomer. The cofactor is Zn(2+).

It carries out the reaction Hydrolysis of DNA containing ring-opened 7-methylguanine residues, releasing 2,6-diamino-4-hydroxy-5-(N-methyl)formamidopyrimidine.. It catalyses the reaction 2'-deoxyribonucleotide-(2'-deoxyribose 5'-phosphate)-2'-deoxyribonucleotide-DNA = a 3'-end 2'-deoxyribonucleotide-(2,3-dehydro-2,3-deoxyribose 5'-phosphate)-DNA + a 5'-end 5'-phospho-2'-deoxyribonucleoside-DNA + H(+). In terms of biological role, involved in base excision repair of DNA damaged by oxidation or by mutagenic agents. Acts as a DNA glycosylase that recognizes and removes damaged bases. Has a preference for oxidized purines, such as 7,8-dihydro-8-oxoguanine (8-oxoG). Has AP (apurinic/apyrimidinic) lyase activity and introduces nicks in the DNA strand. Cleaves the DNA backbone by beta-delta elimination to generate a single-strand break at the site of the removed base with both 3'- and 5'-phosphates. This chain is Formamidopyrimidine-DNA glycosylase, found in Sinorhizobium medicae (strain WSM419) (Ensifer medicae).